Consider the following 86-residue polypeptide: Small ribosomal subunit protein uS17 (86 aa).

Belongs to the universal ribosomal protein uS17 family. As to quaternary structure, part of the 30S ribosomal subunit.

In terms of biological role, one of the primary rRNA binding proteins, it binds specifically to the 5'-end of 16S ribosomal RNA. This Nitrosococcus oceani (strain ATCC 19707 / BCRC 17464 / JCM 30415 / NCIMB 11848 / C-107) protein is Small ribosomal subunit protein uS17.